Reading from the N-terminus, the 213-residue chain is Pyrrolidone-carboxylate peptidase (213 aa).

Active-site residues include Glu-78, Cys-141, and His-165.

Belongs to the peptidase C15 family. In terms of assembly, homotetramer.

Its subcellular location is the cytoplasm. It catalyses the reaction Release of an N-terminal pyroglutamyl group from a polypeptide, the second amino acid generally not being Pro.. Removes 5-oxoproline from various penultimate amino acid residues except L-proline. This Alkaliphilus oremlandii (strain OhILAs) (Clostridium oremlandii (strain OhILAs)) protein is Pyrrolidone-carboxylate peptidase.